Here is a 763-residue protein sequence, read N- to C-terminus: Cadherin-like protein 26 (763 aa).

The first 20 residues, 1 to 20 (MDTRGCAWLLLLLSLPQGQS), serve as a signal peptide directing secretion. Cadherin domains are found at residues 21–140 (HQPL…APQF), 141–250 (PEKE…MPTF), 251–371 (MEDR…PPAF), and 370–478 (AFHP…APTL). The Extracellular portion of the chain corresponds to 21-590 (HQPLHRSKRR…SECEEPSDTW (570 aa)). 3 N-linked (GlcNAc...) asparagine glycosylation sites follow: Asn-56, Asn-60, and Asn-146. Residues Asn-394 and Asn-440 are each glycosylated (N-linked (GlcNAc...) asparagine). A helical membrane pass occupies residues 591 to 611 (LLWWALSPVGAALMVLSAALL). Residues 612-763 (CLLRCSCTFG…AMCFTSRVPS (152 aa)) are Cytoplasmic-facing.

Homodimer. Component of a cadherin:catenin adhesion complex composed of at least of CDH26, beta-catenin/CTNNB1, alpha-catenin/CTNNA1 and p120 catenin/CTNND1. Post-translationally, N-glycosylated.

Its subcellular location is the cell membrane. Cadherins are calcium-dependent cell adhesion proteins. They preferentially interact with themselves in a homophilic manner in connecting cells; cadherins may thus contribute to the sorting of heterogeneous cell types. Ligand for integrins alpha-E/beta-7, ITGAE:ITGAB7, alpha-4/beta-7, ITGA4:ITGAB7 and alpha-4/beta-1, ITGA4:ITGAB1 through which modulates CD4(+) T cells activation. The protein is Cadherin-like protein 26 (Cdh26) of Mus musculus (Mouse).